The sequence spans 195 residues: Orotate phosphoribosyltransferase (195 aa).

5-phospho-alpha-D-ribose 1-diphosphate contacts are provided by residues Arg-86, Lys-90, His-92, and Asp-111–Ser-119. Orotate is bound by residues Thr-115 and Arg-143.

This sequence belongs to the purine/pyrimidine phosphoribosyltransferase family. PyrE subfamily. In terms of assembly, homodimer. Mg(2+) serves as cofactor.

It carries out the reaction orotidine 5'-phosphate + diphosphate = orotate + 5-phospho-alpha-D-ribose 1-diphosphate. The protein operates within pyrimidine metabolism; UMP biosynthesis via de novo pathway; UMP from orotate: step 1/2. Catalyzes the transfer of a ribosyl phosphate group from 5-phosphoribose 1-diphosphate to orotate, leading to the formation of orotidine monophosphate (OMP). This Saccharolobus solfataricus (strain ATCC 35092 / DSM 1617 / JCM 11322 / P2) (Sulfolobus solfataricus) protein is Orotate phosphoribosyltransferase.